A 94-amino-acid chain; its full sequence is uncharacterized protein (94 aa).

The segment at 1–23 (MVLLAGTRPQGGEARCMIPPPPS) is disordered.

This is an uncharacterized protein from Homo sapiens (Human).